A 258-amino-acid chain; its full sequence is Protein UL24 homolog (258 aa).

The protein belongs to the herpesviridae UL24 family.

The protein localises to the virion. It is found in the host cytoplasm. Its subcellular location is the host nucleus. The protein resides in the host nucleolus. It localises to the host Golgi apparatus. Functionally, may participate in nuclear egress of viral particles. Plays a role in the dispersal of several host nucleolar proteins including NCL/nucleolin and NPM1. Since deletion of host NCL/nucleolin negatively impact on nuclear egress, UL24 supposedly acts on this process through its effect on host nucleoli. The protein is Protein UL24 homolog of Homo sapiens (Human).